A 193-amino-acid chain; its full sequence is Xanthine phosphoribosyltransferase (193 aa).

2 residues coordinate xanthine: Leu-20 and Thr-27. Position 128-132 (128-132 (ANGQA)) interacts with 5-phospho-alpha-D-ribose 1-diphosphate. A xanthine-binding site is contributed by Lys-156.

Belongs to the purine/pyrimidine phosphoribosyltransferase family. Xpt subfamily. As to quaternary structure, homodimer.

Its subcellular location is the cytoplasm. The enzyme catalyses XMP + diphosphate = xanthine + 5-phospho-alpha-D-ribose 1-diphosphate. Its pathway is purine metabolism; XMP biosynthesis via salvage pathway; XMP from xanthine: step 1/1. Its function is as follows. Converts the preformed base xanthine, a product of nucleic acid breakdown, to xanthosine 5'-monophosphate (XMP), so it can be reused for RNA or DNA synthesis. The polypeptide is Xanthine phosphoribosyltransferase (Streptococcus pneumoniae serotype 2 (strain D39 / NCTC 7466)).